The following is a 152-amino-acid chain: UPF0225 protein YchJ (152 aa).

The protein belongs to the UPF0225 family.

This chain is UPF0225 protein YchJ, found in Escherichia coli O127:H6 (strain E2348/69 / EPEC).